A 466-amino-acid chain; its full sequence is Ribosomal protein uS12 methylthiotransferase RimO (466 aa).

The region spanning 16 to 127 (PKVAFAHLGC…IVDVLQRVEA (112 aa)) is the MTTase N-terminal domain. Residues C25, C61, C90, C165, C169, and C172 each contribute to the [4Fe-4S] cluster site. One can recognise a Radical SAM core domain in the interval 151 to 380 (TTDQAVAYLK…MALQQPIAAE (230 aa)). Residues 383–454 (QRWVGKTVDV…IYDLTGHIVG (72 aa)) form the TRAM domain.

The protein belongs to the methylthiotransferase family. RimO subfamily. Requires [4Fe-4S] cluster as cofactor.

It localises to the cytoplasm. It carries out the reaction L-aspartate(89)-[ribosomal protein uS12]-hydrogen + (sulfur carrier)-SH + AH2 + 2 S-adenosyl-L-methionine = 3-methylsulfanyl-L-aspartate(89)-[ribosomal protein uS12]-hydrogen + (sulfur carrier)-H + 5'-deoxyadenosine + L-methionine + A + S-adenosyl-L-homocysteine + 2 H(+). Its function is as follows. Catalyzes the methylthiolation of an aspartic acid residue of ribosomal protein uS12. The polypeptide is Ribosomal protein uS12 methylthiotransferase RimO (Synechococcus sp. (strain CC9902)).